A 499-amino-acid polypeptide reads, in one-letter code: Cytochrome P450 710A2 (499 aa).

The chain crosses the membrane as a helical span at residues 5–25 (VSIFASLAPYLVSALLLFFLI). Cys439 contacts heme.

This sequence belongs to the cytochrome P450 family. Heme serves as cofactor. Expressed in the vascular tissues of roots, shoots, stems and leaves. Expressed in root tips, carpes, siliques and seeds.

It localises to the membrane. The catalysed reaction is 5-dehydroepisterol + NADPH + O2 + H(+) = ergosta-5,7,22,24(28)-tetraen-3beta-ol + NADP(+) + 2 H2O. Its pathway is steroid biosynthesis; sterol biosynthesis. In terms of biological role, required to form the C-22 double bond in the sterol side chain. Possesses in vitro C-22 desaturase activity toward 24-epi-campesterol and beta-sitosterol and produces brassicasterol and stigmasterol, respectively. No activity with campesterol. The polypeptide is Cytochrome P450 710A2 (Arabidopsis thaliana (Mouse-ear cress)).